Reading from the N-terminus, the 133-residue chain is MPTIQQLVRKGREVLVEKSKSPALDSCPQRRGVCVRVYTTTPKKPNSAMRKVARVRLTNQKEVNSYIPGEGHNLQEHSIVLVRGGRVKDLPGVRYHIVRGTLDTAGVAGRTQRRSKYGAKRPKPGQAAPAKKK.

Position 89 is a 3-methylthioaspartic acid (Asp89). The interval Asp103 to Lys133 is disordered. The segment covering Thr111 to Lys123 has biased composition (basic residues). The span at Pro124–Lys133 shows a compositional bias: low complexity.

This sequence belongs to the universal ribosomal protein uS12 family. In terms of assembly, part of the 30S ribosomal subunit. Contacts proteins S8 and S17. May interact with IF1 in the 30S initiation complex.

Its function is as follows. With S4 and S5 plays an important role in translational accuracy. Interacts with and stabilizes bases of the 16S rRNA that are involved in tRNA selection in the A site and with the mRNA backbone. Located at the interface of the 30S and 50S subunits, it traverses the body of the 30S subunit contacting proteins on the other side and probably holding the rRNA structure together. The combined cluster of proteins S8, S12 and S17 appears to hold together the shoulder and platform of the 30S subunit. The protein is Small ribosomal subunit protein uS12 of Bacteroides thetaiotaomicron (strain ATCC 29148 / DSM 2079 / JCM 5827 / CCUG 10774 / NCTC 10582 / VPI-5482 / E50).